Consider the following 400-residue polypeptide: S-adenosylmethionine synthase (400 aa).

136–141 (GQGSVD) provides a ligand contact to ATP.

This sequence belongs to the AdoMet synthase 2 family. Mg(2+) is required as a cofactor.

The enzyme catalyses L-methionine + ATP + H2O = S-adenosyl-L-methionine + phosphate + diphosphate. It functions in the pathway amino-acid biosynthesis; S-adenosyl-L-methionine biosynthesis; S-adenosyl-L-methionine from L-methionine: step 1/1. Functionally, catalyzes the formation of S-adenosylmethionine from methionine and ATP. In Thermoplasma acidophilum (strain ATCC 25905 / DSM 1728 / JCM 9062 / NBRC 15155 / AMRC-C165), this protein is S-adenosylmethionine synthase (mat).